Consider the following 469-residue polypeptide: uncharacterized protein (469 aa).

A run of 3 helical transmembrane segments spans residues 42 to 62 (DVIIFLLLFFVAFNVSSAYVI), 179 to 199 (IVLPPGAVILSPQGTLLVTPS), and 249 to 269 (NLKYLLIIAIFGTAIFGGLFV).

The protein resides in the cell membrane. This is an uncharacterized protein from Methanocaldococcus jannaschii (strain ATCC 43067 / DSM 2661 / JAL-1 / JCM 10045 / NBRC 100440) (Methanococcus jannaschii).